We begin with the raw amino-acid sequence, 106 residues long: Ig kappa chain C region, A allele (106 aa).

The region spanning 5 to 102 (PTVSIFPPSM…SSSPVVKSFN (98 aa)) is the Ig-like domain. C26 and C86 are disulfide-bonded.

The sequence is that of Ig kappa chain C region, A allele from Rattus norvegicus (Rat).